Consider the following 463-residue polypeptide: Fumarate hydratase class II (463 aa).

Substrate contacts are provided by residues 98–100 (SGT), 129–132 (HPND), 139–141 (SSN), and T187. H188 functions as the Proton donor/acceptor in the catalytic mechanism. S318 is an active-site residue. Substrate is bound by residues S319 and 324–326 (KVN).

The protein belongs to the class-II fumarase/aspartase family. Fumarase subfamily. In terms of assembly, homotetramer.

The protein resides in the cytoplasm. It carries out the reaction (S)-malate = fumarate + H2O. It participates in carbohydrate metabolism; tricarboxylic acid cycle; (S)-malate from fumarate: step 1/1. Functionally, involved in the TCA cycle. Catalyzes the stereospecific interconversion of fumarate to L-malate. This is Fumarate hydratase class II from Rickettsia bellii (strain RML369-C).